The following is a 202-amino-acid chain: Large ribosomal subunit protein bL25 (202 aa).

This sequence belongs to the bacterial ribosomal protein bL25 family. CTC subfamily. As to quaternary structure, part of the 50S ribosomal subunit; part of the 5S rRNA/L5/L18/L25 subcomplex. Contacts the 5S rRNA. Binds to the 5S rRNA independently of L5 and L18.

This is one of the proteins that binds to the 5S RNA in the ribosome where it forms part of the central protuberance. The chain is Large ribosomal subunit protein bL25 from Chlorobium luteolum (strain DSM 273 / BCRC 81028 / 2530) (Pelodictyon luteolum).